The primary structure comprises 228 residues: Protein TIFY 10a (228 aa).

The region spanning 75–110 (REQEKRQLTIFYGGKVLVFDDFPAEKAKDLMQMASK) is the Tify domain. A Jas motif is present at residues 164–189 (PQARKASLHRFLEKRKDRLQAKAPYQ). The Nuclear localization signal signature appears at 166–173 (ARKASLHR). The interval 175–228 (LEKRKDRLQAKAPYQGSPSDASPVKKELQESQPWLGLGPQVAAPDLSLRQESSQ) is disordered.

This sequence belongs to the TIFY/JAZ family. In terms of assembly, interacts with COI1A and COI1B in a coronatine-dependent manner. Coronatine is an analog of jasmonoyl isoleucine (JA-Ile). In terms of processing, ubiquitinated. Targeted for degradation by the SCF(COI1) E3 ubiquitin ligase-proteasome pathway during jasmonate signaling.

It is found in the nucleus. Its function is as follows. Repressor of jasmonate responses. The polypeptide is Protein TIFY 10a (Oryza sativa subsp. japonica (Rice)).